The primary structure comprises 230 residues: Large ribosomal subunit protein uL1 (230 aa).

The protein belongs to the universal ribosomal protein uL1 family. Part of the 50S ribosomal subunit.

Binds directly to 23S rRNA. The L1 stalk is quite mobile in the ribosome, and is involved in E site tRNA release. Functionally, protein L1 is also a translational repressor protein, it controls the translation of the L11 operon by binding to its mRNA. This Rhodopseudomonas palustris (strain BisB18) protein is Large ribosomal subunit protein uL1.